Consider the following 488-residue polypeptide: Protein nucleotidyltransferase YdiU (488 aa).

Residues glycine 91, glycine 93, arginine 94, lysine 114, aspartate 126, glycine 127, arginine 177, and arginine 184 each coordinate ATP. The segment at 108 to 127 (RFDIQLKGSGPTPYSRRGDG) is disordered. Aspartate 253 functions as the Proton acceptor in the catalytic mechanism. Asparagine 254 and aspartate 263 together coordinate Mg(2+). Aspartate 263 serves as a coordination point for ATP.

Belongs to the SELO family. Mg(2+) is required as a cofactor. Mn(2+) serves as cofactor.

The catalysed reaction is L-seryl-[protein] + ATP = 3-O-(5'-adenylyl)-L-seryl-[protein] + diphosphate. It catalyses the reaction L-threonyl-[protein] + ATP = 3-O-(5'-adenylyl)-L-threonyl-[protein] + diphosphate. The enzyme catalyses L-tyrosyl-[protein] + ATP = O-(5'-adenylyl)-L-tyrosyl-[protein] + diphosphate. It carries out the reaction L-histidyl-[protein] + UTP = N(tele)-(5'-uridylyl)-L-histidyl-[protein] + diphosphate. The catalysed reaction is L-seryl-[protein] + UTP = O-(5'-uridylyl)-L-seryl-[protein] + diphosphate. It catalyses the reaction L-tyrosyl-[protein] + UTP = O-(5'-uridylyl)-L-tyrosyl-[protein] + diphosphate. Its function is as follows. Nucleotidyltransferase involved in the post-translational modification of proteins. It can catalyze the addition of adenosine monophosphate (AMP) or uridine monophosphate (UMP) to a protein, resulting in modifications known as AMPylation and UMPylation. The polypeptide is Protein nucleotidyltransferase YdiU (Bacillus anthracis (strain A0248)).